The sequence spans 98 residues: Prolactin-releasing peptide (98 aa).

A signal peptide spans 1–22 (MKAVGAWLLCLLLLGLALQGAA). F53 is subject to Phenylalanine amide. A propeptide spanning residues 58-98 (AAPGDGPRPGPRRELACIPLEGGAEPSRALLGRLTAQLVQE) is cleaved from the precursor.

In terms of tissue distribution, more abundantly expressed in the brainstem than the hypothalamus.

It localises to the secreted. In terms of biological role, stimulates prolactin (PRL) release and regulates the expression of prolactin through its receptor GPR10. May stimulate lactotrophs directly to secrete PRL. In Ovis aries (Sheep), this protein is Prolactin-releasing peptide (PRLH).